The primary structure comprises 138 residues: Histone H2B.3 (138 aa).

Basic and acidic residues-rich tracts occupy residues 1-18 (MAPK…EKTT) and 26-38 (EKRP…GGDK). Residues 1–46 (MAPKAEKKPVAEKAEKTTAAKKTKAEKRPPASKEGGDKKGKKKSKK) are disordered. 2 positions are modified to N6-acetyllysine: Lys7 and Lys27. A Glycyl lysine isopeptide (Lys-Gly) (interchain with G-Cter in ubiquitin) cross-link involves residue Lys134.

Belongs to the histone H2B family. In terms of assembly, the nucleosome is a histone octamer containing two molecules each of H2A, H2B, H3 and H4 assembled in one H3-H4 heterotetramer and two H2A-H2B heterodimers. The octamer wraps approximately 147 bp of DNA. Can be acetylated to form H2BK6ac and H2BK33ac. In terms of processing, monoubiquitinated to form H2BK143ub1; may give a specific tag for epigenetic transcriptional activation.

Its subcellular location is the nucleus. The protein localises to the chromosome. Functionally, core component of nucleosome. Nucleosomes wrap and compact DNA into chromatin, limiting DNA accessibility to the cellular machineries which require DNA as a template. Histones thereby play a central role in transcription regulation, DNA repair, DNA replication and chromosomal stability. DNA accessibility is regulated via a complex set of post-translational modifications of histones, also called histone code, and nucleosome remodeling. In Triticum aestivum (Wheat), this protein is Histone H2B.3.